The following is a 294-amino-acid chain: MSNKVNFKTASFLFSVCLALSAFNAHANKSDAAAKQIKKLEEDFDGRIGVFAIDTGSGNTFGYRSDERFPLCSSFKGFLAAAVLERVQQKKLDINQKVKYESRDLEYHSPITTKYKGSGMTLGDMASAALQYSDNGATNIIMERFLGGPEGMTKFMRSIGDNEFRLDRWELELNTAIPGDKRDTSTPKAVANSLNKLALGNVLNAKVKAIYQNWLKGNTTGDARIRASVPADWVVGDKTGSCGAYGTANDYAVIWPKNRAPLIVSIYTTRKSKDDKHSDKTIAEASRIAIQAID.

The N-terminal stretch at 1 to 27 (MSNKVNFKTASFLFSVCLALSAFNAHA) is a signal peptide. Cysteines 72 and 242 form a disulfide. Residue Ser73 is the Nucleophile; acyl-ester intermediate of the active site. Residues Ser73, Lys76, Ser133, and Asn135 each coordinate a beta-lactam. The Proton acceptor role is filled by Glu172. Thr239 is an a beta-lactam binding site.

The protein belongs to the class-A beta-lactamase family.

The catalysed reaction is a beta-lactam + H2O = a substituted beta-amino acid. Its activity is regulated as follows. Partially inhibited by the beta-lactamase-blocking agents, clavulanic acid and tazobactam. Not inhibited by EDTA. In terms of biological role, class A beta-lactamase which confers resistance to the beta-lactam antibiotics, including penicillins, some cephalosporins and carbapenems, to JM109 strain E.coli. Acts via hydrolysis of the beta-lactam ring. Has penicillin-, cephalosporin- and carbapenem-hydrolyzing activities. The polypeptide is Beta-lactamase SME-1 (Serratia marcescens).